Reading from the N-terminus, the 341-residue chain is Phosphate acyltransferase (341 aa).

This sequence belongs to the PlsX family. In terms of assembly, homodimer. Probably interacts with PlsY.

Its subcellular location is the cytoplasm. It catalyses the reaction a fatty acyl-[ACP] + phosphate = an acyl phosphate + holo-[ACP]. It functions in the pathway lipid metabolism; phospholipid metabolism. Functionally, catalyzes the reversible formation of acyl-phosphate (acyl-PO(4)) from acyl-[acyl-carrier-protein] (acyl-ACP). This enzyme utilizes acyl-ACP as fatty acyl donor, but not acyl-CoA. The sequence is that of Phosphate acyltransferase from Elusimicrobium minutum (strain Pei191).